A 536-amino-acid chain; its full sequence is Quinate permease (536 aa).

The Cytoplasmic segment spans residues 1–26 (MTLLALKEDRPTPKAVYNWRVYTCAA). Residues 27–47 (IASFASCMIGYDSSFIGTTLA) traverse the membrane as a helical segment. Residues 48–74 (LPSFTKEFDFASYTPGALALLQSNIVS) lie on the Extracellular side of the membrane. The helical transmembrane segment at 75–95 (VYQAGAFFGSLFAFATSYFLG) threads the bilayer. At 96–98 (RRR) the chain is on the cytoplasmic side. The chain crosses the membrane as a helical span at residues 99–119 (SLIAFSVVFIIGAAIMLAADG). The Extracellular segment spans residues 120–131 (QRRGVDPIIAGR). A helical transmembrane segment spans residues 132–152 (VLAGIGVGGASNMVPIYISEL). At 153–160 (APPAVRGR) the chain is on the cytoplasmic side. Residues 161-181 (LVGIYELGWQIGGLVGFWINY) traverse the membrane as a helical segment. At 182 to 195 (GVNTTMAPTRSQWL) the chain is on the extracellular side. Asn184 is a glycosylation site (N-linked (GlcNAc...) asparagine). Residues 196 to 216 (IPFAVQLIPAGLLFLGSFWIP) traverse the membrane as a helical segment. Topologically, residues 217 to 285 (ESPRWLFANG…SLKQPKVRWR (69 aa)) are cytoplasmic. A helical transmembrane segment spans residues 286 to 306 (FFLGGMLFLWQNGSGINAINY). Residues 307–327 (YSPTVFRSIGITGTNTGFLTT) are Extracellular-facing. A helical transmembrane segment spans residues 328 to 349 (GIFGVVKMVLTIIWLLWLVDLV). At 350–352 (GRR) the chain is on the cytoplasmic side. The chain crosses the membrane as a helical span at residues 353 to 373 (RILFVGATGGSLCMWFIGAYI). Over 374–389 (KIAGPGTTKTEEAKLT) the chain is Extracellular. A helical transmembrane segment spans residues 390–410 (SGGIAAIFFFYLWTAFYTPSW). Residues 411 to 435 (NGTPWVINSEMFDQNTRSLGQASAA) lie on the Cytoplasmic side of the membrane. A helical transmembrane segment spans residues 436–456 (ANNWFWNFIISRFTPQMFIKM). At 457 to 458 (EY) the chain is on the extracellular side. Residues 459–479 (GVYFFFASLMLLSVVFIYFFI) form a helical membrane-spanning segment. Topologically, residues 480–536 (PETKSIPLEAMDRLFAIKSVHNANKILMDELNFDRNPEREQSSLDEKDRVTQTENAV) are cytoplasmic. The span at 516 to 530 (PEREQSSLDEKDRVT) shows a compositional bias: basic and acidic residues. Positions 516 to 536 (PEREQSSLDEKDRVTQTENAV) are disordered.

Belongs to the major facilitator superfamily. Sugar transporter (TC 2.A.1.1) family.

Its subcellular location is the membrane. The polypeptide is Quinate permease (qa-y) (Neurospora africana).